We begin with the raw amino-acid sequence, 359 residues long: Dihydroorotate dehydrogenase (quinone) (359 aa).

Residues A61–K65 and T85 each bind FMN. Substrate is bound at residue K65. Substrate is bound at residue N110–F114. FMN contacts are provided by N139 and N170. A substrate-binding site is contributed by N170. S173 functions as the Nucleophile in the catalytic mechanism. A substrate-binding site is contributed by N175. K211 and S239 together coordinate FMN. Residue N240–T241 participates in substrate binding. FMN is bound by residues G262, G291, and Y312–T313.

The protein belongs to the dihydroorotate dehydrogenase family. Type 2 subfamily. As to quaternary structure, monomer. The cofactor is FMN.

The protein localises to the cell membrane. The enzyme catalyses (S)-dihydroorotate + a quinone = orotate + a quinol. It functions in the pathway pyrimidine metabolism; UMP biosynthesis via de novo pathway; orotate from (S)-dihydroorotate (quinone route): step 1/1. Functionally, catalyzes the conversion of dihydroorotate to orotate with quinone as electron acceptor. The protein is Dihydroorotate dehydrogenase (quinone) of Mesorhizobium japonicum (strain LMG 29417 / CECT 9101 / MAFF 303099) (Mesorhizobium loti (strain MAFF 303099)).